A 361-amino-acid chain; its full sequence is Protein RecA (361 aa).

Position 77–84 (77–84 (GPESSGKT)) interacts with ATP.

This sequence belongs to the RecA family.

Its subcellular location is the cytoplasm. Functionally, can catalyze the hydrolysis of ATP in the presence of single-stranded DNA, the ATP-dependent uptake of single-stranded DNA by duplex DNA, and the ATP-dependent hybridization of homologous single-stranded DNAs. It interacts with LexA causing its activation and leading to its autocatalytic cleavage. This chain is Protein RecA, found in Brucella suis (strain ATCC 23445 / NCTC 10510).